The following is a 445-amino-acid chain: Sporulation-specific glucan 1,3-beta-glucosidase (445 aa).

The N-terminal stretch at M1–N21 is a signal peptide. N201 is a glycosylation site (N-linked (GlcNAc...) asparagine). The active-site Proton donor is E233. The Nucleophile role is filled by E335.

Belongs to the glycosyl hydrolase 5 (cellulase A) family.

The protein resides in the secreted. It catalyses the reaction Successive hydrolysis of beta-D-glucose units from the non-reducing ends of (1-&gt;3)-beta-D-glucans, releasing alpha-glucose.. Its function is as follows. Probably involved in the processes of spore formation and contributes to ascospore thermoresistance by participating in the morphogenesis of ascospore walls. The enzyme may do this by modifying glucan linkages in the developing ascospore wall, thus strengthening it or lending it plasticity. The sequence is that of Sporulation-specific glucan 1,3-beta-glucosidase (SPR1) from Saccharomyces cerevisiae (strain ATCC 204508 / S288c) (Baker's yeast).